Reading from the N-terminus, the 455-residue chain is SH3 domain-binding protein 5 (455 aa).

Residues 1 to 12 (MDAALKRSRSEE) are compositionally biased toward basic and acidic residues. Residues 1–63 (MDAALKRSRS…QSTDDINRRE (63 aa)) form a disordered region. The span at 22–41 (DEEEEEEEGMEQGLEEEEEV) shows a compositional bias: acidic residues. Positions 31 to 265 (MEQGLEEEEE…EIHERRRSSA (235 aa)) are sufficient for interaction with RAB11A and for guanine nucleotide exchange activity. The span at 42–51 (DPRIQGELEK) shows a compositional bias: basic and acidic residues. 4 coiled-coil regions span residues 44 to 90 (RIQG…LVKK), 97 to 145 (DSKP…RLLE), 154 to 200 (AWQE…LEKK), and 211 to 255 (YFEL…MISD). 2 disordered regions span residues 259-293 (ERRRSSAMGPRGCGVGAEGSSTSVEDLPGSKPEPD) and 306-345 (SCSNFVSEDDSETQSVSSFSSGPTSPSEMPDQFPAVVRPG). The segment covering 306–317 (SCSNFVSEDDSE) has biased composition (acidic residues). Residues 320 to 332 (SVSSFSSGPTSPS) show a composition bias toward low complexity. S351 bears the Phosphoserine; by MAPK12 and MAPK9 mark. The interval 369–435 (SECSGASSPE…ALENRMKQLS (67 aa)) is disordered. Residues S375 and S376 each carry the phosphoserine modification. Positions 380–396 (EVERGDRAEGAENKTSD) are enriched in basic and acidic residues. Low complexity predominate over residues 403-421 (GLSSSSGSGGSSKSQSSTS). Phosphoserine occurs at positions 418 and 421.

Belongs to the SH3BP5 family. Interacts with BTK. Interacts with all isoforms of MAPK8, MAPK9, MAPK10 and MAPK12. Interacts with GDP-bound and nucleotide-free forms of RAB11A. As to expression, highly expressed in testis and ovaries. It is also expressed in a variety of tissues including spleen, lymph node, thymus, bone marrow, fetal liver, colon, small intestine and prostate.

The protein resides in the cytoplasmic vesicle membrane. Its subcellular location is the mitochondrion. Its function is as follows. Functions as a guanine nucleotide exchange factor (GEF) with specificity for RAB11A and RAB25. Inhibits the auto- and transphosphorylation activity of BTK. Plays a negative regulatory role in BTK-related cytoplasmic signaling in B-cells. May be involved in BCR-induced apoptotic cell death. The polypeptide is SH3 domain-binding protein 5 (SH3BP5) (Homo sapiens (Human)).